Consider the following 103-residue polypeptide: Sec-independent protein translocase protein TatA (103 aa).

The helical transmembrane segment at 1-21 threads the bilayer; that stretch reads MGNIFSPTHLIIILLLILLLF. Residues 48–103 are disordered; the sequence is EESIEDKVEMADTSQVINEESQQSQPLSVKRAAIRRKASSDSKGGKASIAKKQRVK. A compositionally biased stretch (polar residues) spans 59 to 74; sequence DTSQVINEESQQSQPL.

It belongs to the TatA/E family. The Tat system comprises two distinct complexes: a TatABC complex, containing multiple copies of TatA, TatB and TatC subunits, and a separate TatA complex, containing only TatA subunits. Substrates initially bind to the TatABC complex, which probably triggers association of the separate TatA complex to form the active translocon.

It is found in the cell inner membrane. Functionally, part of the twin-arginine translocation (Tat) system that transports large folded proteins containing a characteristic twin-arginine motif in their signal peptide across membranes. TatA could form the protein-conducting channel of the Tat system. This Bartonella tribocorum (strain CIP 105476 / IBS 506) protein is Sec-independent protein translocase protein TatA.